The sequence spans 434 residues: MSGNFFIFLLLLVTPGEAKKSFLSFLNIQNTEMLSFTRTEENIVVRSSYKDKQPHSSYLLVKLEDPKVLQVVNVTKTSLAVTDFTVNLKTFPGETNVTLQLWESEGRQTTLIDELKNVRVRVFRQTDDSLLQAPIHVDSSIFLLVLSMILLNKCAFGCKIEFQVLQTVWKRPLPILLGVVIQFFLMPFCGFLLSQILGLPKAQAFGFVMTCTCPGGGGGYLFALLLEGDVTLAILMTCTSTSLALIMMPVNSYFYSRLLGLAGAFHVPVLKIVSTLLFILMPMSTGVIIKHKMPAKAICLERVVRPLSLTLMFVGIYLAFRMGLVFLRMANLEVFLLGLLVPALGLLFGYSLAKVYLLPLPVCKTVALETGMLNSFLALAIIQLSFSQPKAHEASVAPFTVAMCSSCEMLLLLLVYKAKRRPSLSTEYEKTPLV.

Residues 1–18 form the signal peptide; it reads MSGNFFIFLLLLVTPGEA. Residues 19–129 lie on the Extracellular side of the membrane; that stretch reads KKSFLSFLNI…VRVFRQTDDS (111 aa). N-linked (GlcNAc...) asparagine glycosylation is found at Asn-73 and Asn-96. Residues 130–150 traverse the membrane as a helical segment; that stretch reads LLQAPIHVDSSIFLLVLSMIL. Over 151 to 172 the chain is Cytoplasmic; the sequence is LNKCAFGCKIEFQVLQTVWKRP. The helical transmembrane segment at 173 to 193 threads the bilayer; sequence LPILLGVVIQFFLMPFCGFLL. Topologically, residues 194 to 203 are extracellular; it reads SQILGLPKAQ. Residues 204-226 form a helical membrane-spanning segment; the sequence is AFGFVMTCTCPGGGGGYLFALLL. Residues 227 to 232 are Cytoplasmic-facing; that stretch reads EGDVTL. Residues 233 to 255 traverse the membrane as a helical segment; that stretch reads AILMTCTSTSLALIMMPVNSYFY. At 256 to 268 the chain is on the extracellular side; it reads SRLLGLAGAFHVP. Residues 269 to 289 traverse the membrane as a helical segment; it reads VLKIVSTLLFILMPMSTGVII. Residues 290–306 lie on the Cytoplasmic side of the membrane; it reads KHKMPAKAICLERVVRP. A helical membrane pass occupies residues 307-327; it reads LSLTLMFVGIYLAFRMGLVFL. Topologically, residues 328-331 are extracellular; sequence RMAN. The helical transmembrane segment at 332–352 threads the bilayer; sequence LEVFLLGLLVPALGLLFGYSL. Topologically, residues 353 to 365 are cytoplasmic; it reads AKVYLLPLPVCKT. The helical transmembrane segment at 366 to 386 threads the bilayer; that stretch reads VALETGMLNSFLALAIIQLSF. At 387–395 the chain is on the extracellular side; that stretch reads SQPKAHEAS. Residues 396–416 traverse the membrane as a helical segment; that stretch reads VAPFTVAMCSSCEMLLLLLVY. Residues 417–434 are Cytoplasmic-facing; that stretch reads KAKRRPSLSTEYEKTPLV.

The protein belongs to the bile acid:sodium symporter (BASS) (TC 2.A.28) family.

The protein resides in the membrane. In Mus musculus (Mouse), this protein is Sodium/bile acid cotransporter 5 (Slc10a5).